The sequence spans 207 residues: Holliday junction branch migration complex subunit RuvA (207 aa).

Positions 1–65 (MYDYIRGTLT…ETEHLLYGFH (65 aa)) are domain I. A domain II region spans residues 66–144 (SREERECFRI…DLLPLDSRVE (79 aa)). The interval 145–150 (TSQTHT) is flexible linker. The domain III stretch occupies residues 150–207 (TTSSCLEEGIQALAALGYSKIAAERMIAEAIKDLPEGSSLTDILPIALKKNFSGVNKD).

It belongs to the RuvA family. Homotetramer. Forms an RuvA(8)-RuvB(12)-Holliday junction (HJ) complex. HJ DNA is sandwiched between 2 RuvA tetramers; dsDNA enters through RuvA and exits via RuvB. An RuvB hexamer assembles on each DNA strand where it exits the tetramer. Each RuvB hexamer is contacted by two RuvA subunits (via domain III) on 2 adjacent RuvB subunits; this complex drives branch migration. In the full resolvosome a probable DNA-RuvA(4)-RuvB(12)-RuvC(2) complex forms which resolves the HJ.

The protein localises to the cytoplasm. In terms of biological role, the RuvA-RuvB-RuvC complex processes Holliday junction (HJ) DNA during genetic recombination and DNA repair, while the RuvA-RuvB complex plays an important role in the rescue of blocked DNA replication forks via replication fork reversal (RFR). RuvA specifically binds to HJ cruciform DNA, conferring on it an open structure. The RuvB hexamer acts as an ATP-dependent pump, pulling dsDNA into and through the RuvAB complex. HJ branch migration allows RuvC to scan DNA until it finds its consensus sequence, where it cleaves and resolves the cruciform DNA. In Chlamydia pneumoniae (Chlamydophila pneumoniae), this protein is Holliday junction branch migration complex subunit RuvA.